Consider the following 288-residue polypeptide: NAD kinase (288 aa).

The active-site Proton acceptor is aspartate 68. NAD(+)-binding positions include 68-69 (DG), 142-143 (ND), arginine 153, aspartate 172, and glutamine 242.

It belongs to the NAD kinase family. Requires a divalent metal cation as cofactor.

The protein localises to the cytoplasm. The catalysed reaction is NAD(+) + ATP = ADP + NADP(+) + H(+). In terms of biological role, involved in the regulation of the intracellular balance of NAD and NADP, and is a key enzyme in the biosynthesis of NADP. Catalyzes specifically the phosphorylation on 2'-hydroxyl of the adenosine moiety of NAD to yield NADP. The protein is NAD kinase of Desulforamulus reducens (strain ATCC BAA-1160 / DSM 100696 / MI-1) (Desulfotomaculum reducens).